We begin with the raw amino-acid sequence, 551 residues long: Putative hydroxymethylpyrimidine/phosphomethylpyrimidine kinase 2 (551 aa).

Residue glutamate 76 participates in 4-amino-5-hydroxymethyl-2-methylpyrimidine binding.

In the N-terminal section; belongs to the ThiD family. The protein in the C-terminal section; belongs to the thiaminase-2 family.

It localises to the cytoplasm. The enzyme catalyses 4-amino-5-hydroxymethyl-2-methylpyrimidine + ATP = 4-amino-2-methyl-5-(phosphooxymethyl)pyrimidine + ADP + H(+). It carries out the reaction 4-amino-2-methyl-5-(phosphooxymethyl)pyrimidine + ATP = 4-amino-2-methyl-5-(diphosphooxymethyl)pyrimidine + ADP. Its pathway is cofactor biosynthesis; thiamine diphosphate biosynthesis; 4-amino-2-methyl-5-diphosphomethylpyrimidine from 5-amino-1-(5-phospho-D-ribosyl)imidazole: step 2/3. The protein operates within cofactor biosynthesis; thiamine diphosphate biosynthesis; 4-amino-2-methyl-5-diphosphomethylpyrimidine from 5-amino-1-(5-phospho-D-ribosyl)imidazole: step 3/3. Catalyzes the phosphorylation of hydroxymethylpyrimidine phosphate (HMP-P) to HMP-PP, and of HMP to HMP-P. The protein is Putative hydroxymethylpyrimidine/phosphomethylpyrimidine kinase 2 of Schizosaccharomyces pombe (strain 972 / ATCC 24843) (Fission yeast).